Reading from the N-terminus, the 623-residue chain is Putative chaperone protein ClpB2, chloroplastic (623 aa).

A Clp R domain is found at 1–123 (MNDLKFDPNV…KSEVEKLRGE (123 aa)). Repeat stretches follow at residues 6–71 (FDPN…NQSL) and 77–123 (RNLG…LRGE). Positions 129–375 (LKTYGTDLVE…HVKAQLDIQP (247 aa)) are i. 172-179 (GEPGVGKT) contributes to the ATP binding site. A coiled-coil region spans residues 368-462 (KAQLDIQPEE…LQEAERQHDV (95 aa)). 571–578 (GPTGVGKT) provides a ligand contact to ATP.

It belongs to the ClpA/ClpB family.

The protein is Putative chaperone protein ClpB2, chloroplastic (CLPB2) of Arabidopsis thaliana (Mouse-ear cress).